Here is a 463-residue protein sequence, read N- to C-terminus: Chaperone SurA (463 aa).

A signal peptide spans 1 to 25; sequence MTRYFSIVLSLLLAVSCVFLPVASA. 2 consecutive PpiC domains span residues 175–277 and 291–390; these read GAQY…KLVE and ATEY…QRLG. The interval 439 to 463 is disordered; it reads ADDHHTPSAAVTPATGAVLPAATKH.

The protein resides in the periplasm. It carries out the reaction [protein]-peptidylproline (omega=180) = [protein]-peptidylproline (omega=0). Its function is as follows. Chaperone involved in the correct folding and assembly of outer membrane proteins. Recognizes specific patterns of aromatic residues and the orientation of their side chains, which are found more frequently in integral outer membrane proteins. May act in both early periplasmic and late outer membrane-associated steps of protein maturation. The polypeptide is Chaperone SurA (Xylella fastidiosa (strain Temecula1 / ATCC 700964)).